Reading from the N-terminus, the 282-residue chain is Pantothenate synthetase (282 aa).

ATP is bound at residue 30 to 37; that stretch reads MGFLHDGH. The active-site Proton donor is H37. A (R)-pantoate-binding site is contributed by Q60. Q60 lines the beta-alanine pocket. 146–149 provides a ligand contact to ATP; sequence GQKD. Q152 provides a ligand contact to (R)-pantoate. ATP-binding positions include I175 and 183 to 186; that span reads KSSR.

The protein belongs to the pantothenate synthetase family. In terms of assembly, homodimer.

The protein resides in the cytoplasm. It carries out the reaction (R)-pantoate + beta-alanine + ATP = (R)-pantothenate + AMP + diphosphate + H(+). It participates in cofactor biosynthesis; (R)-pantothenate biosynthesis; (R)-pantothenate from (R)-pantoate and beta-alanine: step 1/1. In terms of biological role, catalyzes the condensation of pantoate with beta-alanine in an ATP-dependent reaction via a pantoyl-adenylate intermediate. This Campylobacter jejuni subsp. jejuni serotype O:23/36 (strain 81-176) protein is Pantothenate synthetase.